The following is a 926-amino-acid chain: DNA mismatch repair protein MutS (926 aa).

Positions 1–67 are disordered; sequence MAASPNPLQG…NPNQINDLDQ (67 aa). 2 stretches are compositionally biased toward polar residues: residues 18–44 and 57–67; these read QSTTNGGKETNNSIGSSENLSNQQLKS and KNPNQINDLDQ. 726 to 733 contributes to the ATP binding site; sequence GPNASGKS.

It belongs to the DNA mismatch repair MutS family.

Functionally, this protein is involved in the repair of mismatches in DNA. It is possible that it carries out the mismatch recognition step. This protein has a weak ATPase activity. The chain is DNA mismatch repair protein MutS from Prochlorococcus marinus (strain NATL1A).